Reading from the N-terminus, the 466-residue chain is Zinc finger and SCAN domain-containing protein 26 (466 aa).

Lysine 21 is covalently cross-linked (Glycyl lysine isopeptide (Lys-Gly) (interchain with G-Cter in SUMO2)). An SCAN box domain is found at 42-124; that stretch reads CKQFRQLRYE…GILEDLQLDR (83 aa). 2 stretches are compositionally biased toward basic and acidic residues: residues 124 to 135 and 163 to 173; these read RGKAGEQKDSAQ and KPEERGKETRS. Positions 124–182 are disordered; that stretch reads RGKAGEQKDSAQRSRPTVLVGEPAPRREAREQPGCALPQKPEERGKETRSENGNLIAGT. A C2H2-type 1; degenerate zinc finger spans residues 220–242; sequence SQCLETKERLVQNSGLIEHDRAH. 7 C2H2-type zinc fingers span residues 270 to 292, 298 to 320, 326 to 348, 354 to 376, 382 to 404, 410 to 432, and 438 to 460; these read HPCQ…QKIH, YQCK…LRIH, YLCI…QKIH, RECK…QRVH, HHCN…HRIH, FKCN…VRIH, and YKCS…QRHH.

It localises to the nucleus. Functionally, may be involved in transcriptional regulation. The sequence is that of Zinc finger and SCAN domain-containing protein 26 (Zscan26) from Mus musculus (Mouse).